The following is a 1314-amino-acid chain: E3 ubiquitin-protein ligase RNF123 (1314 aa).

The residue at position 2 (Ala-2) is an N-acetylalanine. Residues 74-254 (VDSEDNESQG…VAFNFGSRPL (181 aa)) enclose the B30.2/SPRY domain. The interval 460-483 (HRSSRESRDGKEAREETTEERQRR) is disordered. Positions 462–483 (SSRESRDGKEAREETTEERQRR) are enriched in basic and acidic residues. Position 675 is a phosphoserine (Ser-675). Arg-683 is subject to Asymmetric dimethylarginine. An interaction with NFKB1 region spans residues 968–974 (WILVRLW). Zn(2+) contacts are provided by Cys-1254, Cys-1257, Cys-1269, His-1271, Cys-1274, Cys-1277, Cys-1288, and Cys-1291. Residues 1254-1292 (CPICYAHPISAVFQPCGHKSCKACINQHLMNNKDCFFCK) form an RING-type zinc finger.

Component of the KPC complex composed of RNF123/KPC1 and UBAC1/KPC2. Interacts with UBAC1 and CDKN1B via its N-terminal domain. Interacts with RIGI (via N-terminus) and IFIH1 (via N-terminus). Ubiquitinated, leading to its degradation. Deubiquitinated by USP19, thereby stimulating CDKN1B ubiquitin-dependent degradation.

The protein localises to the cytoplasm. It carries out the reaction S-ubiquitinyl-[E2 ubiquitin-conjugating enzyme]-L-cysteine + [acceptor protein]-L-lysine = [E2 ubiquitin-conjugating enzyme]-L-cysteine + N(6)-ubiquitinyl-[acceptor protein]-L-lysine.. The protein operates within protein modification; protein ubiquitination. In terms of biological role, catalytic subunit of the KPC complex that acts as E3 ubiquitin-protein ligase. Promotes the ubiquitination and proteasome-mediated degradation of CDKN1B which is the cyclin-dependent kinase inhibitor at the G0-G1 transition of the cell cycle. Also acts as a key regulator of the NF-kappa-B signaling by promoting maturation of the NFKB1 component of NF-kappa-B: acts by catalyzing ubiquitination of the NFKB1 p105 precursor, leading to limited proteasomal degradation of NFKB1 p105 and generation of the active NFKB1 p50 subunit. Functions also as an inhibitor of innate antiviral signaling mediated by RIGI and IFIH1 independently of its E3 ligase activity. Interacts with the N-terminal CARD domains of RIGI and IFIH1 and competes with the downstream adapter MAVS. The polypeptide is E3 ubiquitin-protein ligase RNF123 (Rnf123) (Mus musculus (Mouse)).